A 231-amino-acid chain; its full sequence is tRNA (guanine-N(1)-)-methyltransferase (231 aa).

S-adenosyl-L-methionine contacts are provided by residues Gly-112 and 132-137; that span reads LGDFVL.

Belongs to the RNA methyltransferase TrmD family. Homodimer.

Its subcellular location is the cytoplasm. It carries out the reaction guanosine(37) in tRNA + S-adenosyl-L-methionine = N(1)-methylguanosine(37) in tRNA + S-adenosyl-L-homocysteine + H(+). Functionally, specifically methylates guanosine-37 in various tRNAs. The sequence is that of tRNA (guanine-N(1)-)-methyltransferase from Microcystis aeruginosa (strain NIES-843 / IAM M-2473).